Reading from the N-terminus, the 462-residue chain is N-myc proto-oncogene protein (462 aa).

The interval 19 to 47 is interaction with AURKA; that stretch reads LEFDSLQPCFYPDEDDFYFGGPDSTPPGE. The interaction with AURKA and FBXW7 stretch occupies residues 61-90; that stretch reads LSPSRAFPEHSPEPSNWATEMLLPEADLWG. Residues 76 to 85 carry the 9aaTAD motif; that stretch reads NWATEMLLPE. Disordered regions lie at residues 133-177, 232-290, and 332-390; these read EKLQ…ATLP, AAPA…SNNK, and APSP…LERQ. A compositionally biased stretch (low complexity) spans 138–174; it reads GHGPPGASSSCPAPGVGASSSGGRALGGSASAGRTGA. The segment covering 257-276 has biased composition (acidic residues); sequence TLSDSDDEDDEEEDEEEEID. Phosphoserine; by CK2 is present on residues S259 and S261. The 53-residue stretch at 379–431 folds into the bHLH domain; it reads ERRRNHNILERQRRNDLRSSFLTLRDHVPELVKNEKAAKVVILKKATEYVHAL. Positions 431-452 are leucine-zipper; sequence LQANEHQLLLEKEKLQARQQQL.

As to quaternary structure, efficient DNA binding requires dimerization with another bHLH protein. Binds DNA as a heterodimer with MAX. Interacts with KDM5A, KDM5B and HUWE1. Interacts with MYCNOS. Interacts with AURKA; interaction is phospho-independent and triggers AURKA activation; AURKA competes with FBXW7 for binding to unphosphorylated MYCN but not for binding to unphosphorylated MYCN. Interacts with FBXW7; FBXW7 competes with AURKA for binding to unphosphorylated MYCN but not for binding to phosphorylated MYCN. Phosphorylated by GSK3-beta which may promote its degradation. Phosphorylated by AURKA.

The protein localises to the nucleus. Its function is as follows. Positively regulates the transcription of MYCNOS in neuroblastoma cells. This is N-myc proto-oncogene protein (Mycn) from Rattus norvegicus (Rat).